We begin with the raw amino-acid sequence, 502 residues long: 1-aminocyclopropane-1-carboxylate synthase-like protein 1 (502 aa).

The interval 15–35 (CPGSDSIQDLPSNKGDGLERE) is disordered. A substrate-binding site is contributed by Glu106. N6-(pyridoxal phosphate)lysine is present on Lys324.

It belongs to the class-I pyridoxal-phosphate-dependent aminotransferase family.

In terms of biological role, does not catalyze the synthesis of 1-aminocyclopropane-1-carboxylate but is capable of catalyzing the deamination of L-vinylglycine. The protein is 1-aminocyclopropane-1-carboxylate synthase-like protein 1 (ACCS) of Bos taurus (Bovine).